The primary structure comprises 692 residues: Proprotein convertase subtilisin/kexin type 9 (692 aa).

Positions 1–30 (MGTVSSRRSWWPLPLPLLLLLLLGPAGARA) are cleaved as a signal peptide. The propeptide occupies 31-152 (QEDEDGDYEE…IEEDSSVFAQ (122 aa)). Y38 is subject to Sulfotyrosine. S47 is modified (phosphoserine). Residues 77-149 (TYVVVLKEET…VDYIEEDSSV (73 aa)) form the Inhibitor I9 domain. Positions 155–444 (PWNLERITPA…VLTPNLVAAL (290 aa)) constitute a Peptidase S8 domain. Active-site charge relay system residues include D186 and H226. Cystine bridges form between C223-C255 and C323-C358. Catalysis depends on S386, which acts as the Charge relay system. A C-terminal domain region spans residues 450–692 (RAGWQLFCRT…HLVQASQELQ (243 aa)). 3 disulfide bridges follow: C457–C527, C477–C526, and C486–C509. The N-linked (GlcNAc...) asparagine glycan is linked to N533. Intrachain disulfides connect C534/C601, C552/C600, C562/C588, C608/C679, C626/C678, and C635/C654. At S688 the chain carries Phosphoserine.

It belongs to the peptidase S8 family. As to quaternary structure, monomer. Can self-associate to form dimers and higher multimers which may have increased LDLR degrading activity. The precursor protein but not the mature protein may form multimers. Interacts with APOB, VLDLR, LRP8/APOER2 and BACE1. The full-length immature form (pro-PCSK9) interacts with SCNN1A, SCNN1B and SCNN1G. The pro-PCSK9 form (via C-terminal domain) interacts with LDLR. Interacts (via the C-terminal domain) with ANXA2 (via repeat Annexin 1); the interaction inhibits the degradation of LDLR. Requires Ca(2+) as cofactor. Post-translationally, cleavage by furin and PCSK5 generates a truncated inactive protein that is unable to induce LDLR degradation. Undergoes autocatalytic cleavage in the endoplasmic reticulum to release the propeptide from the N-terminus and the cleavage of the propeptide is strictly required for its maturation and activation. The cleaved propeptide however remains associated with the catalytic domain through non-covalent interactions, preventing potential substrates from accessing its active site. As a result, it is secreted from cells as a propeptide-containing, enzymatically inactive protein. In terms of processing, phosphorylation protects the propeptide against proteolysis.

It is found in the cytoplasm. It localises to the secreted. The protein localises to the endosome. The protein resides in the lysosome. Its subcellular location is the cell surface. It is found in the endoplasmic reticulum. It localises to the golgi apparatus. With respect to regulation, its proteolytic activity is autoinhibited by the non-covalent binding of the propeptide to the catalytic domain. Inhibited by EGTA. Crucial player in the regulation of plasma cholesterol homeostasis. Binds to low-density lipid receptor family members: low density lipoprotein receptor (LDLR), very low density lipoprotein receptor (VLDLR), apolipoprotein E receptor (LRP1/APOER) and apolipoprotein receptor 2 (LRP8/APOER2), and promotes their degradation in intracellular acidic compartments. Acts via a non-proteolytic mechanism to enhance the degradation of the hepatic LDLR through a clathrin LDLRAP1/ARH-mediated pathway. May prevent the recycling of LDLR from endosomes to the cell surface or direct it to lysosomes for degradation. Can induce ubiquitination of LDLR leading to its subsequent degradation. Inhibits intracellular degradation of APOB via the autophagosome/lysosome pathway in a LDLR-independent manner. Involved in the disposal of non-acetylated intermediates of BACE1 in the early secretory pathway. Inhibits epithelial Na(+) channel (ENaC)-mediated Na(+) absorption by reducing ENaC surface expression primarily by increasing its proteasomal degradation. Regulates neuronal apoptosis via modulation of LRP8/APOER2 levels and related anti-apoptotic signaling pathways. This is Proprotein convertase subtilisin/kexin type 9 (PCSK9) from Macaca mulatta (Rhesus macaque).